The following is a 372-amino-acid chain: Transaldolase 2 (372 aa).

The active-site Schiff-base intermediate with substrate is K140.

The protein belongs to the transaldolase family. Type 2 subfamily.

It localises to the cytoplasm. The enzyme catalyses D-sedoheptulose 7-phosphate + D-glyceraldehyde 3-phosphate = D-erythrose 4-phosphate + beta-D-fructose 6-phosphate. Its pathway is carbohydrate degradation; pentose phosphate pathway; D-glyceraldehyde 3-phosphate and beta-D-fructose 6-phosphate from D-ribose 5-phosphate and D-xylulose 5-phosphate (non-oxidative stage): step 2/3. Transaldolase is important for the balance of metabolites in the pentose-phosphate pathway. The polypeptide is Transaldolase 2 (Streptomyces coelicolor (strain ATCC BAA-471 / A3(2) / M145)).